The sequence spans 892 residues: Gamma-tubulin small complex component GCP3 (892 aa).

This sequence belongs to the TUBGCP family. Component of the gamma-tubulin small complex (gamma-TuSC) composed of tubulin gamma chain, gamma-tubulin complex protein 2 (GCP2) and gamma-tubulin complex protein 3 (GCP3). Interacts with tubulin gamma chain.

The protein resides in the cytoplasm. The protein localises to the cytoskeleton. It localises to the flagellum axoneme. Its subcellular location is the flagellum basal body. Its function is as follows. Component of the gamma-tubulin small complex (gamma-TuSC) involved in microtubule (MT) nucleation for the formation of median bodies and in the biogenesis of flagella. Gamma-TuSC may be required for the correct positioning of EB1 within the trophozoites. In Giardia intestinalis (strain ATCC 50803 / WB clone C6) (Giardia lamblia), this protein is Gamma-tubulin small complex component GCP3.